The primary structure comprises 431 residues: Gamma-glutamyl phosphate reductase (431 aa).

This sequence belongs to the gamma-glutamyl phosphate reductase family.

It localises to the cytoplasm. It carries out the reaction L-glutamate 5-semialdehyde + phosphate + NADP(+) = L-glutamyl 5-phosphate + NADPH + H(+). The protein operates within amino-acid biosynthesis; L-proline biosynthesis; L-glutamate 5-semialdehyde from L-glutamate: step 2/2. In terms of biological role, catalyzes the NADPH-dependent reduction of L-glutamate 5-phosphate into L-glutamate 5-semialdehyde and phosphate. The product spontaneously undergoes cyclization to form 1-pyrroline-5-carboxylate. The polypeptide is Gamma-glutamyl phosphate reductase (Methylobacterium nodulans (strain LMG 21967 / CNCM I-2342 / ORS 2060)).